The sequence spans 201 residues: MALHDENVVWHSHPVTVAAREQLHGHRGVVLWFTGLSGSGKSTVAGALEEALHHRGVSTYLLDGDNVRHGLCRDLGFSDADRQENIRRVGEVASLMADAGLIVLTAFISPHRAERQLVKERVGHDRFIEIYVNTPLAICEQRDPKGLYKKARAGELRNFTGIDAIYEAPDSPQVHLNGEQLVTNLVSQLLDLLRRRDIIRS.

ATP is bound at residue 35-42 (GLSGSGKS). The Phosphoserine intermediate role is filled by Ser109.

This sequence belongs to the APS kinase family.

The enzyme catalyses adenosine 5'-phosphosulfate + ATP = 3'-phosphoadenylyl sulfate + ADP + H(+). The protein operates within sulfur metabolism; hydrogen sulfide biosynthesis; sulfite from sulfate: step 2/3. In terms of biological role, catalyzes the synthesis of activated sulfate. The polypeptide is Adenylyl-sulfate kinase (Salmonella paratyphi C (strain RKS4594)).